Here is a 346-residue protein sequence, read N- to C-terminus: Aspartate-semialdehyde dehydrogenase (346 aa).

NADP(+) contacts are provided by residues 12-15 and 40-41; these read SGAV and RS. Residue R101 coordinates phosphate. Catalysis depends on C131, which acts as the Acyl-thioester intermediate. Residue Q158 participates in substrate binding. 161–162 serves as a coordination point for NADP(+); sequence SG. Residue K225 coordinates phosphate. A substrate-binding site is contributed by R246. The active-site Proton acceptor is H253. Q326 serves as a coordination point for NADP(+).

Belongs to the aspartate-semialdehyde dehydrogenase family. Homodimer.

It catalyses the reaction L-aspartate 4-semialdehyde + phosphate + NADP(+) = 4-phospho-L-aspartate + NADPH + H(+). It functions in the pathway amino-acid biosynthesis; L-lysine biosynthesis via DAP pathway; (S)-tetrahydrodipicolinate from L-aspartate: step 2/4. It participates in amino-acid biosynthesis; L-methionine biosynthesis via de novo pathway; L-homoserine from L-aspartate: step 2/3. Its pathway is amino-acid biosynthesis; L-threonine biosynthesis; L-threonine from L-aspartate: step 2/5. Catalyzes the NADPH-dependent formation of L-aspartate-semialdehyde (L-ASA) by the reductive dephosphorylation of L-aspartyl-4-phosphate. The chain is Aspartate-semialdehyde dehydrogenase from Helicobacter pylori (strain ATCC 700392 / 26695) (Campylobacter pylori).